A 464-amino-acid chain; its full sequence is UDP-N-acetylmuramoylalanine--D-glutamate ligase (464 aa).

Residue 112 to 118 (GTDGKTT) coordinates ATP.

The protein belongs to the MurCDEF family.

Its subcellular location is the cytoplasm. It catalyses the reaction UDP-N-acetyl-alpha-D-muramoyl-L-alanine + D-glutamate + ATP = UDP-N-acetyl-alpha-D-muramoyl-L-alanyl-D-glutamate + ADP + phosphate + H(+). It participates in cell wall biogenesis; peptidoglycan biosynthesis. In terms of biological role, cell wall formation. Catalyzes the addition of glutamate to the nucleotide precursor UDP-N-acetylmuramoyl-L-alanine (UMA). This Chlorobium phaeobacteroides (strain DSM 266 / SMG 266 / 2430) protein is UDP-N-acetylmuramoylalanine--D-glutamate ligase.